A 94-amino-acid polypeptide reads, in one-letter code: Small ribosomal subunit protein bS18 (94 aa).

It belongs to the bacterial ribosomal protein bS18 family. Part of the 30S ribosomal subunit. Forms a tight heterodimer with protein bS6.

Its function is as follows. Binds as a heterodimer with protein bS6 to the central domain of the 16S rRNA, where it helps stabilize the platform of the 30S subunit. This chain is Small ribosomal subunit protein bS18, found in Acetivibrio thermocellus (strain ATCC 27405 / DSM 1237 / JCM 9322 / NBRC 103400 / NCIMB 10682 / NRRL B-4536 / VPI 7372) (Clostridium thermocellum).